We begin with the raw amino-acid sequence, 328 residues long: Tryptophan--tRNA ligase (328 aa).

ATP-binding positions include 8-10 (RPT) and 16-17 (GH). A 'HIGH' region motif is present at residues 9-17 (PTGKLHIGH). An L-tryptophan-binding site is contributed by Asp-136. ATP contacts are provided by residues 148 to 150 (GED), Leu-186, and 193 to 197 (KMSKS). The 'KMSKS' region motif lies at 193–197 (KMSKS).

This sequence belongs to the class-I aminoacyl-tRNA synthetase family. In terms of assembly, homodimer.

It is found in the cytoplasm. It carries out the reaction tRNA(Trp) + L-tryptophan + ATP = L-tryptophyl-tRNA(Trp) + AMP + diphosphate + H(+). Functionally, catalyzes the attachment of tryptophan to tRNA(Trp). The protein is Tryptophan--tRNA ligase of Thermotoga maritima (strain ATCC 43589 / DSM 3109 / JCM 10099 / NBRC 100826 / MSB8).